The primary structure comprises 461 residues: L-seryl-tRNA(Sec) selenium transferase (461 aa).

Lysine 294 carries the N6-(pyridoxal phosphate)lysine modification.

This sequence belongs to the SelA family. Pyridoxal 5'-phosphate serves as cofactor.

Its subcellular location is the cytoplasm. The catalysed reaction is L-seryl-tRNA(Sec) + selenophosphate + H(+) = L-selenocysteinyl-tRNA(Sec) + phosphate. It participates in aminoacyl-tRNA biosynthesis; selenocysteinyl-tRNA(Sec) biosynthesis; selenocysteinyl-tRNA(Sec) from L-seryl-tRNA(Sec) (bacterial route): step 1/1. Its function is as follows. Converts seryl-tRNA(Sec) to selenocysteinyl-tRNA(Sec) required for selenoprotein biosynthesis. This chain is L-seryl-tRNA(Sec) selenium transferase, found in Haemophilus influenzae (strain PittEE).